A 235-amino-acid chain; its full sequence is uncharacterized protein (235 aa).

2 disordered regions span residues 20–64 and 140–164; these read IHPN…LPIK and SQFF…NFDQ. 2 stretches are compositionally biased toward low complexity: residues 30 to 60 and 140 to 161; these read NNNN…SNNN and SQFF…NNKN. A coiled-coil region spans residues 174 to 213; that stretch reads KYMEFLSDIEQLNSDLKESKDNLESISIEMVLLETRLKGL.

This is an uncharacterized protein from Dictyostelium discoideum (Social amoeba).